The following is a 37-amino-acid chain: GFSSIFRGVAKFASKGLGKDLARLGVNLVACKISKQC.

Cys31 and Cys37 form a disulfide bridge.

Expressed by the skin glands.

Its subcellular location is the secreted. Its function is as follows. Antibacterial activity against Gram-negative bacterium E.coli. This Lithobates pipiens (Northern leopard frog) protein is Esculentin-2P.